A 153-amino-acid chain; its full sequence is Deoxyuridine 5'-triphosphate nucleotidohydrolase (153 aa).

Residues 71–73 (RSG), Asn-84, 88–90 (TID), and Lys-98 each bind substrate.

The protein belongs to the dUTPase family. Requires Mg(2+) as cofactor.

The enzyme catalyses dUTP + H2O = dUMP + diphosphate + H(+). Its pathway is pyrimidine metabolism; dUMP biosynthesis; dUMP from dCTP (dUTP route): step 2/2. Its function is as follows. This enzyme is involved in nucleotide metabolism: it produces dUMP, the immediate precursor of thymidine nucleotides and it decreases the intracellular concentration of dUTP so that uracil cannot be incorporated into DNA. The chain is Deoxyuridine 5'-triphosphate nucleotidohydrolase from Wolbachia pipientis wMel.